We begin with the raw amino-acid sequence, 213 residues long: MGVELRSYVYLDNLQRQHASYIGTVATGFLTLPGDASVWIEISPGIEINRMMDIALKAAVVRPGVQFIERLYGLMEVHASNQGEVREAGRAVLSALGLTERDRLKPKIVSSQIIRNIDAHQAQLINRQRRGQMLLAGETLYVLEVQPAAYAALAANEAEKAALINILQVSAIGSFGRLFLGGEERDIIAGSRAAVAALENLSGREHPGDRSRE.

2 consecutive BMC circularly permuted domains span residues 4–106 and 107–211; these read ELRS…RLKP and KIVS…GDRS. A Probably important for pore gating motif is present at residues 69–70; it reads ER.

Belongs to the EutL/PduB family. As to quaternary structure, a dimer of stacked trimers, the same faces interact.

It is found in the carboxysome. Functionally, probably part of the carboxysome shell, a polyhedral inclusion where RuBisCO (ribulose bisphosphate carboxylase, rbcL-rbcS) is sequestered. It is thought that this protein controls transport of RuBisCO reactants in and out of the carboxysome; residual densities in the 4 X-ray structures suggest that differing compounds bind in interior pockets, depending on the open or closed state of the pore. The protein is Carboxysome shell protein CcmP of Synechococcus elongatus (strain ATCC 33912 / PCC 7942 / FACHB-805) (Anacystis nidulans R2).